Reading from the N-terminus, the 158-residue chain is Endoribonuclease YbeY (158 aa).

The Zn(2+) site is built by histidine 118, histidine 122, and histidine 128.

It belongs to the endoribonuclease YbeY family. Zn(2+) serves as cofactor.

The protein localises to the cytoplasm. Its function is as follows. Single strand-specific metallo-endoribonuclease involved in late-stage 70S ribosome quality control and in maturation of the 3' terminus of the 16S rRNA. This Haemophilus ducreyi (strain 35000HP / ATCC 700724) protein is Endoribonuclease YbeY.